The chain runs to 371 residues: Lombricine kinase (371 aa).

A Phosphagen kinase N-terminal domain is found at 1–86 (MPKFTARQNF…FDAVINEKHG (86 aa)). The Phosphagen kinase C-terminal domain occupies 113-355 (YVKSARIRTG…GKLIEYEKLL (243 aa)). ATP contacts are provided by residues 116–120 (SARIR), His-179, Arg-224, Arg-280, 308–313 (RGTGGE), and Asp-323.

This sequence belongs to the ATP:guanido phosphotransferase family. In terms of assembly, homodimer.

The enzyme catalyses L-lombricine + ATP = N-phospho-L-lombricine + ADP + H(+). The sequence is that of Lombricine kinase from Eisenia fetida (Red wiggler worm).